The following is a 280-amino-acid chain: Dolichyl-diphosphooligosaccharide--protein glycosyltransferase subunit 2 (280 aa).

The signal sequence occupies residues 1 to 16 (MKLLLVLLTIASVALA). Residues 17-187 (AVDDVAVNNF…FRQPEKRPSA (171 aa)) lie on the Lumenal side of the membrane. The helical transmembrane segment at 188-208 (LISDLFTIICLSPLLILVVLW) threads the bilayer. Residues 209 to 222 (SQVGINFQNAPASP) lie on the Cytoplasmic side of the membrane. A helical membrane pass occupies residues 223–243 (WVPIFHVGLIGIFGIYFMFWV). A topological domain (lumenal) is located at residue glutamine 244. A helical membrane pass occupies residues 245–265 (FDMFVTLKYLAVLGFLTFVAG). Residues 266–280 (NRVLRAISESKQKSE) are Cytoplasmic-facing.

It belongs to the SWP1 family. As to quaternary structure, component of the oligosaccharyltransferase (OST) complex.

It localises to the endoplasmic reticulum membrane. It participates in protein modification; protein glycosylation. Functionally, subunit of the oligosaccharyl transferase (OST) complex that catalyzes the initial transfer of a defined glycan (Glc(3)Man(9)GlcNAc(2) in eukaryotes) from the lipid carrier dolichol-pyrophosphate to an asparagine residue within an Asn-X-Ser/Thr consensus motif in nascent polypeptide chains, the first step in protein N-glycosylation. N-glycosylation occurs cotranslationally and the complex associates with the Sec61 complex at the channel-forming translocon complex that mediates protein translocation across the endoplasmic reticulum (ER). All subunits are required for a maximal enzyme activity. The sequence is that of Dolichyl-diphosphooligosaccharide--protein glycosyltransferase subunit 2 from Caenorhabditis elegans.